We begin with the raw amino-acid sequence, 1628 residues long: Centrosomal protein of 170 kDa protein B (1628 aa).

One can recognise an FHA domain in the interval 23–73 (IFVGREDCELMLQSRSVDKQHAVINYDSDKDEHRVKDLGSLNGTFVNDVRI). Disordered regions lie at residues 136-201 (EHGA…DMTQ), 329-369 (LIRR…SEDP), 415-504 (PRKK…GKNY), 566-586 (SDVR…DAGT), 637-659 (LASE…KLSN), 719-739 (EHQG…LPQL), 758-842 (ESQR…KKST), 1005-1084 (VSLV…LDFT), 1100-1341 (TVSS…EDEQ), 1379-1405 (AGDG…TPAS), 1443-1463 (GSTG…DPSK), and 1560-1628 (HLDV…TYIV). 2 stretches are compositionally biased toward basic and acidic residues: residues 147–156 (KQDKADKKAT) and 180–201 (KLDK…DMTQ). Residues 421–434 (QSFTHNANSPQNDT) are compositionally biased toward polar residues. Residues 436–453 (PVLKAKAEKRKGTLHVEK) are compositionally biased toward basic and acidic residues. A compositionally biased stretch (polar residues) spans 454-479 (VSTNGMGSTAPASKSLSSPSFPQRSN). Basic and acidic residues predominate over residues 481–490 (FRREKTEDRI). Composition is skewed to basic and acidic residues over residues 758–773 (ESQR…RISE) and 817–828 (WKGEESHSREPS). Residues 1005 to 1023 (VSLVSDKNVPSHSQKNRIV) show a composition bias toward polar residues. Positions 1045 to 1056 (ARERLSEKRRTV) are enriched in basic and acidic residues. The span at 1129–1150 (RSSNAQKVQQALTRSNSLSTPR) shows a compositional bias: polar residues. Over residues 1176–1193 (SNISPGTSSANSSSAKSS) the composition is skewed to low complexity. Over residues 1216–1227 (NVPSDSETTSSV) the composition is skewed to polar residues. Composition is skewed to low complexity over residues 1261–1280 (TQKQ…SSST), 1312–1328 (ASTA…SRRQ), and 1381–1398 (DGDS…SISS). The span at 1564-1596 (PSSNKKTSSTILTSNPLSRTTNNSAARTESQTP) shows a compositional bias: polar residues. The segment covering 1606–1618 (SSSSSSRSPGSSF) has biased composition (low complexity).

This sequence belongs to the CEP170 family.

The protein localises to the cytoplasm. It is found in the cytoskeleton. Plays a role in microtubule organization. The chain is Centrosomal protein of 170 kDa protein B (cep170b) from Xenopus tropicalis (Western clawed frog).